A 455-amino-acid polypeptide reads, in one-letter code: Serine incorporator 2 (455 aa).

Helical transmembrane passes span 5-27 (LGACSLLSCASCLCGSAPCILCS), 40-57 (LIFTFFLFLGVLVSIIML), 96-118 (AVYRMCFATAAFFFFFTLLMLCV), 131-150 (GFWFFKFLILVGLTVGAFYI), 160-182 (FYFGVVGSFLFILIQLVLLIDFA), 202-224 (YAGLFFFTLLFYLLSIAAVALMF), 239-256 (FISLNLTFCVCVSIAAVL), 268-290 (LLQASVITLYTMFVTWSALSSIP), 317-339 (QWWDAPSIVGLIIFLLCTLFISL), 385-407 (TYSYSFFHFCLVLASLHVMMTLT), and 422-444 (WTAVWVKICASWAGLLLYLWTLV).

It belongs to the TDE1 family.

It localises to the cell membrane. It catalyses the reaction a 1,2-diacyl-sn-glycero-3-phospho-L-serine(in) = a 1,2-diacyl-sn-glycero-3-phospho-L-serine(out). The catalysed reaction is a 1,2-diacyl-sn-glycero-3-phosphocholine(in) = a 1,2-diacyl-sn-glycero-3-phosphocholine(out). It carries out the reaction a 1,2-diacyl-sn-glycero-3-phosphoethanolamine(in) = a 1,2-diacyl-sn-glycero-3-phosphoethanolamine(out). Functionally, non-ATP-dependent, non-specific lipid transporter for phosphatidylserine, phosphatidylcholine, and phosphatidylethanolamine. Functions as a scramblase that flips lipids in both directions across the membrane. In contrast to SERINC3 and SERINC5, has no effect on HIV-1 particles infectivity. The polypeptide is Serine incorporator 2 (Homo sapiens (Human)).